Reading from the N-terminus, the 297-residue chain is tRNA pseudouridine synthase B (297 aa).

Catalysis depends on D44, which acts as the Nucleophile.

The protein belongs to the pseudouridine synthase TruB family. Type 1 subfamily.

The catalysed reaction is uridine(55) in tRNA = pseudouridine(55) in tRNA. Responsible for synthesis of pseudouridine from uracil-55 in the psi GC loop of transfer RNAs. This chain is tRNA pseudouridine synthase B, found in Corynebacterium glutamicum (strain ATCC 13032 / DSM 20300 / JCM 1318 / BCRC 11384 / CCUG 27702 / LMG 3730 / NBRC 12168 / NCIMB 10025 / NRRL B-2784 / 534).